We begin with the raw amino-acid sequence, 223 residues long: 3,4-dihydroxy-2-butanone 4-phosphate synthase (223 aa).

D-ribulose 5-phosphate-binding positions include 47–48 (RE), Asp-52, 160–164 (RRGHT), and Glu-184. Glu-48 contributes to the Mg(2+) binding site. His-163 is a binding site for Mg(2+).

It belongs to the DHBP synthase family. In terms of assembly, homodimer. Mg(2+) is required as a cofactor. Mn(2+) serves as cofactor.

The catalysed reaction is D-ribulose 5-phosphate = (2S)-2-hydroxy-3-oxobutyl phosphate + formate + H(+). Its pathway is cofactor biosynthesis; riboflavin biosynthesis; 2-hydroxy-3-oxobutyl phosphate from D-ribulose 5-phosphate: step 1/1. Catalyzes the conversion of D-ribulose 5-phosphate to formate and 3,4-dihydroxy-2-butanone 4-phosphate. The chain is 3,4-dihydroxy-2-butanone 4-phosphate synthase from Cupriavidus pinatubonensis (strain JMP 134 / LMG 1197) (Cupriavidus necator (strain JMP 134)).